Here is a 303-residue protein sequence, read N- to C-terminus: Probable cell division protein WhiA (303 aa).

The H-T-H motif DNA-binding region spans 272-303; that stretch reads SIQQIADSLAVPLTKSGVNHRLRKINKIAEDL.

This sequence belongs to the WhiA family.

Functionally, involved in cell division and chromosome segregation. This is Probable cell division protein WhiA from Streptococcus mutans serotype c (strain ATCC 700610 / UA159).